The sequence spans 224 residues: CRP-like cAMP-activated global transcriptional regulator (224 aa).

Residues Gly-64–Thr-70, Gly-79–Ser-82, Arg-89–Thr-90, Thr-134–Asn-135, Ile-142–Phe-143, and Glu-178–Arg-188 each bind 3',5'-cyclic AMP. Positions Thr-144–Glu-217 constitute an HTH crp-type domain. The segment at residues Gln-177–Ala-196 is a DNA-binding region (H-T-H motif).

In terms of assembly, homodimer.

Its function is as follows. Global transcriptional regulator that complexes with cAMP and binds to specific DNA promoter sites, causing DNA-bending, to regulate transcription. cAMP improves binding to specific DNA sequences, probably by altering protein conformation. Activates expression of whiB1. The protein is CRP-like cAMP-activated global transcriptional regulator of Mycobacterium tuberculosis (strain CDC 1551 / Oshkosh).